An 83-amino-acid chain; its full sequence is Small ribosomal subunit protein uS17 (83 aa).

It belongs to the universal ribosomal protein uS17 family. As to quaternary structure, part of the 30S ribosomal subunit.

Functionally, one of the primary rRNA binding proteins, it binds specifically to the 5'-end of 16S ribosomal RNA. This chain is Small ribosomal subunit protein uS17, found in Buchnera aphidicola subsp. Acyrthosiphon pisum (strain 5A).